Here is a 341-residue protein sequence, read N- to C-terminus: Methionine import ATP-binding protein MetN (341 aa).

Residues 6 to 247 (IEIKKLSKNF…PQHQATRHLL (242 aa)) form the ABC transporter domain. 44–51 (GMSGAGKS) contributes to the ATP binding site.

The protein belongs to the ABC transporter superfamily. Methionine importer (TC 3.A.1.24) family. In terms of assembly, the complex is composed of two ATP-binding proteins (MetN), two transmembrane proteins (MetI) and a solute-binding protein (MetQ).

It localises to the cell inner membrane. It catalyses the reaction L-methionine(out) + ATP + H2O = L-methionine(in) + ADP + phosphate + H(+). It carries out the reaction D-methionine(out) + ATP + H2O = D-methionine(in) + ADP + phosphate + H(+). In terms of biological role, part of the ABC transporter complex MetNIQ involved in methionine import. Responsible for energy coupling to the transport system. The polypeptide is Methionine import ATP-binding protein MetN (Protochlamydia amoebophila (strain UWE25)).